A 470-amino-acid polypeptide reads, in one-letter code: D-serine/D-alanine/glycine transporter (470 aa).

12 helical membrane passes run 30-50 (LIAIGGAIGTGLFMGSGKTIS), 51-71 (LAGPSIIFVYMIIGFMLFFVM), 102-122 (FTGWTYWFCWVVTGMADVVAI), 128-148 (FWFPGLSDWVASLSVIILLLV), 162-182 (FWFAMIKIVAIVSLIVVGLVM), 211-231 (LSGFFAGFQIAVFAFVGIELV), 256-276 (IIMFYVFSLIVIMSVTPWSSV), 283-303 (FVELFVLVGLPAAASVINFVV), 350-370 (FSCICLLGGVVMLYVNPSVIG), 371-391 (AFTMITTVSAILFMFVWTIIL), 413-433 (PLGKLMCWVCMAFFVFVLVLL), and 441-461 (QALLVTPLWFIALGLGWLFIG).

This sequence belongs to the amino acid-polyamine-organocation (APC) superfamily. Amino acid transporter (AAT) (TC 2.A.3.1) family.

The protein resides in the cell inner membrane. The enzyme catalyses D-alanine(in) + H(+)(in) = D-alanine(out) + H(+)(out). The catalysed reaction is D-serine(out) + H(+)(out) = D-serine(in) + H(+)(in). It catalyses the reaction glycine(in) + H(+)(in) = glycine(out) + H(+)(out). It carries out the reaction D-cycloserine(in) + H(+)(in) = D-cycloserine(out) + H(+)(out). Uptake of D-serine is inhibited by D-alanine, D-cycloserine, glycine and at high concentrations of D-threonine. In terms of biological role, permease that is involved in the transport across the cytoplasmic membrane of D-alanine, D-serine and glycine. Is the only transporter of D-alanine. Transports D-serine less efficiently than DsdX. In addition, in minimal media, transports the broad spectrum antibiotic D-cycloserine into the cell. Transports D-cycloserine only in minimal media, and not in a complex medium, suggesting that CycA does not play a role in D-cycloserine transport when E.coli is grown in a complex or biologically relevant medium, probably due to competition from other CycA substrates present in the medium. The protein is D-serine/D-alanine/glycine transporter (cycA) of Escherichia coli O6:H1 (strain CFT073 / ATCC 700928 / UPEC).